The primary structure comprises 617 residues: DNA double-strand break repair protein Mre11 (617 aa).

D12, H14, D53, and N88 together coordinate Mn(2+). The active-site Proton donor is H89. 3 residues coordinate Mn(2+): H158, D189, and H191. Residues 395–432 show a composition bias toward low complexity; sequence SPVDPSSSVSSIESSGSVSPIDSVSTVSPSSPSSSAII. Disordered stretches follow at residues 395–437 and 513–617; these read SPVD…EPEE and VEDE…GDYL. A compositionally biased stretch (polar residues) spans 529–547; it reads APQSSSPVSFSDNSQTGFS. A compositionally biased stretch (low complexity) spans 549–559; sequence ISPPESIPSPE. A compositionally biased stretch (basic and acidic residues) spans 560–583; that stretch reads ILKENSEADADEKPVDGKLSEEKP.

The protein belongs to the MRE11/RAD32 family. In terms of assembly, homodimer. Forms a heterotetramer composed of two Mre11 subunits and two Rad50 subunits. The cofactor is Mn(2+).

Nuclease activity is regulated by Rad50. Its function is as follows. Part of the Rad50/Mre11 complex, which is involved in the early steps of DNA double-strand break (DSB) repair. The complex may facilitate opening of the processed DNA ends to aid in the recruitment of HerA and NurA. Mre11 binds to DSB ends and has both double-stranded 3'-5' exonuclease activity and single-stranded endonuclease activity. The protein is DNA double-strand break repair protein Mre11 of Methanosarcina mazei (strain ATCC BAA-159 / DSM 3647 / Goe1 / Go1 / JCM 11833 / OCM 88) (Methanosarcina frisia).